The primary structure comprises 242 residues: Biosynthetic peptidoglycan transglycosylase (242 aa).

The helical transmembrane segment at 19–39 (LMVVLAVFWAGGIALFSVAPV) threads the bilayer.

The protein belongs to the glycosyltransferase 51 family.

It localises to the cell inner membrane. The catalysed reaction is [GlcNAc-(1-&gt;4)-Mur2Ac(oyl-L-Ala-gamma-D-Glu-L-Lys-D-Ala-D-Ala)](n)-di-trans,octa-cis-undecaprenyl diphosphate + beta-D-GlcNAc-(1-&gt;4)-Mur2Ac(oyl-L-Ala-gamma-D-Glu-L-Lys-D-Ala-D-Ala)-di-trans,octa-cis-undecaprenyl diphosphate = [GlcNAc-(1-&gt;4)-Mur2Ac(oyl-L-Ala-gamma-D-Glu-L-Lys-D-Ala-D-Ala)](n+1)-di-trans,octa-cis-undecaprenyl diphosphate + di-trans,octa-cis-undecaprenyl diphosphate + H(+). Its pathway is cell wall biogenesis; peptidoglycan biosynthesis. Its function is as follows. Peptidoglycan polymerase that catalyzes glycan chain elongation from lipid-linked precursors. In Shigella boydii serotype 4 (strain Sb227), this protein is Biosynthetic peptidoglycan transglycosylase.